Here is a 300-residue protein sequence, read N- to C-terminus: Ankyrin repeat domain-containing protein 54 (300 aa).

A disordered region spans residues 1–27; the sequence is MAAAAGDADDEPRSGHSSSEGECAVAP. Residue A2 is modified to N-acetylalanine. 2 positions are modified to phosphoserine: S58 and S63. Residues 99 to 117 carry the Nuclear localization signal (NLS) motif; sequence RRLGPTGKEVHALKRLRDS. ANK repeat units lie at residues 109 to 138, 142 to 171, 175 to 204, and 208 to 244; these read HALKRLRDSANANDVETVQQLLEDGADPCA, KGRTALHFASCNGNDQIVQLLLDHGADPNQ, LGNTPLHLAACTNHVPVITTLLRGGARVDA, and AGRTPLHLAKSKLNILQEGHAQCLEAVRLEVKQIIHM. An LYN-binding region spans residues 141-241; that stretch reads DKGRTALHFA…EAVRLEVKQI (101 aa). The short motif at 283–293 is the Nuclear export signal (NES) element; sequence LLASFTSLSLQ.

As to quaternary structure, interacts (via ankyrin repeat region) with LYN (via SH3-domain) in an activation-independent status of LYN. Forms a multiprotein complex with LYN and HCLS1. Interacts with TSN2, VAV1, DBNL and LASP1.

The protein resides in the nucleus. The protein localises to the cytoplasm. It is found in the midbody. Functionally, plays an important role in regulating intracellular signaling events associated with erythroid terminal differentiation. The protein is Ankyrin repeat domain-containing protein 54 (ANKRD54) of Homo sapiens (Human).